Here is a 364-residue protein sequence, read N- to C-terminus: Phosphoserine aminotransferase (364 aa).

An L-glutamate-binding site is contributed by R46. Residues 80 to 81 (AR), W106, T157, D176, and Q199 each bind pyridoxal 5'-phosphate. N6-(pyridoxal phosphate)lysine is present on K200. Residue 241–242 (NT) participates in pyridoxal 5'-phosphate binding.

Belongs to the class-V pyridoxal-phosphate-dependent aminotransferase family. SerC subfamily. In terms of assembly, homodimer. Pyridoxal 5'-phosphate serves as cofactor.

Its subcellular location is the cytoplasm. It carries out the reaction O-phospho-L-serine + 2-oxoglutarate = 3-phosphooxypyruvate + L-glutamate. The catalysed reaction is 4-(phosphooxy)-L-threonine + 2-oxoglutarate = (R)-3-hydroxy-2-oxo-4-phosphooxybutanoate + L-glutamate. It functions in the pathway amino-acid biosynthesis; L-serine biosynthesis; L-serine from 3-phospho-D-glycerate: step 2/3. It participates in cofactor biosynthesis; pyridoxine 5'-phosphate biosynthesis; pyridoxine 5'-phosphate from D-erythrose 4-phosphate: step 3/5. In terms of biological role, catalyzes the reversible conversion of 3-phosphohydroxypyruvate to phosphoserine and of 3-hydroxy-2-oxo-4-phosphonooxybutanoate to phosphohydroxythreonine. This is Phosphoserine aminotransferase from Vibrio cholerae serotype O1 (strain ATCC 39315 / El Tor Inaba N16961).